Consider the following 344-residue polypeptide: Glycerol-3-phosphate dehydrogenase [NAD(P)+] 2 (344 aa).

S12, W13, R33, R34, and K107 together coordinate NADPH. Positions 107, 138, and 140 each coordinate sn-glycerol 3-phosphate. Residue A142 coordinates NADPH. K193, D246, S256, R257, and N258 together coordinate sn-glycerol 3-phosphate. Residue K193 is the Proton acceptor of the active site. Position 257 (R257) interacts with NADPH. V281 and E283 together coordinate NADPH.

This sequence belongs to the NAD-dependent glycerol-3-phosphate dehydrogenase family.

The protein resides in the cytoplasm. It carries out the reaction sn-glycerol 3-phosphate + NAD(+) = dihydroxyacetone phosphate + NADH + H(+). The catalysed reaction is sn-glycerol 3-phosphate + NADP(+) = dihydroxyacetone phosphate + NADPH + H(+). It participates in membrane lipid metabolism; glycerophospholipid metabolism. Functionally, catalyzes the reduction of the glycolytic intermediate dihydroxyacetone phosphate (DHAP) to sn-glycerol 3-phosphate (G3P), the key precursor for phospholipid synthesis. The protein is Glycerol-3-phosphate dehydrogenase [NAD(P)+] 2 of Salinibacter ruber (strain DSM 13855 / M31).